A 518-amino-acid polypeptide reads, in one-letter code: Squalene monooxygenase 1,2 (518 aa).

The next 2 membrane-spanning stretches (helical) occupy residues 3 to 23 (MAFV…WTIF) and 48 to 68 (GPDV…YALA). FAD contacts are provided by residues 58-59 (VG), 78-79 (ER), R86, F91, R158, V174, D337, and M350. Residues 448–468 (LFYHLFVISLSSIGQLLSPFP) traverse the membrane as a helical segment.

The protein belongs to the squalene monooxygenase family. It depends on FAD as a cofactor.

It localises to the membrane. The enzyme catalyses squalene + reduced [NADPH--hemoprotein reductase] + O2 = (S)-2,3-epoxysqualene + oxidized [NADPH--hemoprotein reductase] + H2O + H(+). It participates in terpene metabolism; lanosterol biosynthesis; lanosterol from farnesyl diphosphate: step 2/3. Its function is as follows. Catalyzes the stereospecific oxidation of squalene to (S)-2,3-epoxysqualene, and is considered to be a rate-limiting enzyme in steroid biosynthesis. The chain is Squalene monooxygenase 1,2 (SQP1,2) from Brassica napus (Rape).